We begin with the raw amino-acid sequence, 139 residues long: Small ribosomal subunit protein bS6 (139 aa).

Positions 118–139 (SFKGGSKIETPTGSESTDIQEK) are disordered. Residues 126–139 (ETPTGSESTDIQEK) are compositionally biased toward polar residues.

This sequence belongs to the bacterial ribosomal protein bS6 family.

Its function is as follows. Binds together with bS18 to 16S ribosomal RNA. The protein is Small ribosomal subunit protein bS6 of Borrelia garinii subsp. bavariensis (strain ATCC BAA-2496 / DSM 23469 / PBi) (Borreliella bavariensis).